The primary structure comprises 202 residues: Large ribosomal subunit protein uL4 (202 aa).

The tract at residues 45–71 is disordered; the sequence is HAQKNRSEVSGSGKKPWRQKGTGRARV.

This sequence belongs to the universal ribosomal protein uL4 family. Part of the 50S ribosomal subunit.

Its function is as follows. One of the primary rRNA binding proteins, this protein initially binds near the 5'-end of the 23S rRNA. It is important during the early stages of 50S assembly. It makes multiple contacts with different domains of the 23S rRNA in the assembled 50S subunit and ribosome. Forms part of the polypeptide exit tunnel. In Buchnera aphidicola subsp. Baizongia pistaciae (strain Bp), this protein is Large ribosomal subunit protein uL4.